A 189-amino-acid chain; its full sequence is Protein jagunal homolog (189 aa).

The Cytoplasmic portion of the chain corresponds to 1-34 (MSSRGVRAAGTDGTDFQNRQRVAQHYQESAQYKS). The helical transmembrane segment at 35-55 (ILKWFFVPHFLILVFMWLKVG) threads the bilayer. Residues 56-78 (SELLRTNFGWKNAFFDRLDMPSA) lie on the Lumenal side of the membrane. The helical transmembrane segment at 79–99 (YPWEYVWCFSFIPIVLAIYSF) threads the bilayer. The Cytoplasmic segment spans residues 100 to 105 (QRNKLK). A helical transmembrane segment spans residues 106 to 126 (ILHYAYYAEFVVGIFPCMIGL). Residues 127–150 (GGQLPELMEYAQDMEGSNTPTFKG) are Lumenal-facing. The chain crosses the membrane as a helical span at residues 151 to 171 (IFPMVIIWYIFFAVALQIHGF). The Cytoplasmic segment spans residues 172–189 (SMYFMHHLAAAWAPVKRD).

Belongs to the jagunal family.

It is found in the endoplasmic reticulum membrane. In Caenorhabditis elegans, this protein is Protein jagunal homolog.